Here is a 343-residue protein sequence, read N- to C-terminus: tRNA N6-adenosine threonylcarbamoyltransferase (343 aa).

The Fe cation site is built by histidine 115 and histidine 119. Substrate-binding positions include 137 to 141 (IVSGG), aspartate 170, glycine 183, aspartate 187, and asparagine 276. Aspartate 304 is a binding site for Fe cation.

It belongs to the KAE1 / TsaD family. It depends on Fe(2+) as a cofactor.

The protein localises to the cytoplasm. The enzyme catalyses L-threonylcarbamoyladenylate + adenosine(37) in tRNA = N(6)-L-threonylcarbamoyladenosine(37) in tRNA + AMP + H(+). Required for the formation of a threonylcarbamoyl group on adenosine at position 37 (t(6)A37) in tRNAs that read codons beginning with adenine. Is involved in the transfer of the threonylcarbamoyl moiety of threonylcarbamoyl-AMP (TC-AMP) to the N6 group of A37, together with TsaE and TsaB. TsaD likely plays a direct catalytic role in this reaction. The chain is tRNA N6-adenosine threonylcarbamoyltransferase from Staphylococcus carnosus (strain TM300).